Here is a 503-residue protein sequence, read N- to C-terminus: Puromycin resistance protein pur8 (503 aa).

The Cytoplasmic segment spans residues 1–24; sequence MARKPDISAVPVESAACQGPDPRR. The chain crosses the membrane as a helical span at residues 25–45; the sequence is WWGLVVILAAQLLVVLDGTVV. Over 46 to 64 the chain is Extracellular; sequence NIALPSVQRDLGMSDTSRQ. Residues 65–85 traverse the membrane as a helical segment; it reads WVITAYTLAFGGLLLLGGRVA. Residues 86 to 92 are Cytoplasmic-facing; that stretch reads DAFGRRR. A helical transmembrane segment spans residues 93–113; sequence IFAVGILGFGLASLLGGAAPD. The Extracellular portion of the chain corresponds to 114 to 122; that stretch reads PGTLFLARA. Residues 123 to 143 form a helical membrane-spanning segment; that stretch reads LQGVFAAALAPAALALINTLF. The Cytoplasmic portion of the chain corresponds to 144–152; it reads TEPGERGKA. The chain crosses the membrane as a helical span at residues 153-173; the sequence is FGVYGAVSGGGAAVGLLAGGL. Residues 174–181 are Extracellular-facing; that stretch reads LTEYLDWR. A helical membrane pass occupies residues 182–202; sequence WCLYVNAPVALLALLGCRLLP. Residues 203–212 are Cytoplasmic-facing; it reads RDRRTGRAVR. The chain crosses the membrane as a helical span at residues 213 to 233; it reads LDLPGTLLGCGGLVAIVYAFA. Residues 234 to 241 lie on the Extracellular side of the membrane; sequence EAESGWGD. A helical transmembrane segment spans residues 242–262; the sequence is PLVVRLLVLGVLMLVAFALVE. At 263-280 the chain is on the cytoplasmic side; the sequence is RRVQDPLLPPGVVAHRVR. A helical transmembrane segment spans residues 281 to 301; sequence GGSFLVVGLPQIGLFGLFLFL. The Extracellular portion of the chain corresponds to 302-313; sequence TYYLQGILDYSP. Residues 314-334 traverse the membrane as a helical segment; that stretch reads VLTGVAFLPLGLGIAVGSSLI. The Cytoplasmic segment spans residues 335–346; sequence AARLLPRTRPRT. Residues 347–367 form a helical membrane-spanning segment; that stretch reads LIVGALLAAAAGMALLTRLEP. Over 368–371 the chain is Extracellular; that stretch reads DTPQ. Residues 372 to 392 form a helical membrane-spanning segment; it reads VYLTHLLPAQILIGLGIGCMM. The Cytoplasmic segment spans residues 393 to 422; it reads MPAMHTATARVAPHEAGAAAAVVNSAQQVG. Residues 423–443 traverse the membrane as a helical segment; the sequence is GALGVALLNTVSTGATAAYLA. The Extracellular portion of the chain corresponds to 444–461; the sequence is DHGTSPAATVDGTVHGYT. The helical transmembrane segment at 462-482 threads the bilayer; it reads VAIAFAVGVLLLTAVLAWVLI. The Cytoplasmic portion of the chain corresponds to 483-503; it reads DSRTEAADETGSASVTPARPR.

It belongs to the major facilitator superfamily. EmrB family.

It is found in the cell membrane. May be involved in active puromycin efflux energized by a proton-dependent electrochemical gradient. In addition, it could be implicated in secreting N-acetylpuromycin, the last intermediate of the puromycin biosynthesis pathway, to the environment. The protein is Puromycin resistance protein pur8 (pur8) of Streptomyces alboniger.